The following is a 187-amino-acid chain: Auxin-binding protein T85 (187 aa).

Residues 1 to 20 (MARHVLVVVAVLLFATAEAS) form the signal peptide. Residues Cys22 and Cys177 are joined by a disulfide bond. Residues His78, His80, and Glu84 each coordinate Zn(2+). Residue Asn117 is glycosylated (N-linked (GlcNAc...) asparagine). His128 is a binding site for Zn(2+). The Prevents secretion from ER signature appears at 184–187 (KDEL).

Homodimer.

The protein resides in the endoplasmic reticulum lumen. This is probably a receptor for the plant hormone auxin. In Nicotiana tabacum (Common tobacco), this protein is Auxin-binding protein T85 (T85).